Consider the following 181-residue polypeptide: Translationally-controlled tumor protein homolog (181 aa).

The 181-residue stretch at 1-181 (MLIYKDIFTD…VKEAIIEEKC (181 aa)) folds into the TCTP domain.

Belongs to the TCTP family.

It is found in the cytoplasm. Involved in calcium binding and microtubule stabilization. The chain is Translationally-controlled tumor protein homolog (tct-1) from Caenorhabditis elegans.